The sequence spans 545 residues: DnaJ homolog subfamily C member 21 (545 aa).

The region spanning 3-69 is the J domain; the sequence is CHYEVLGVKR…QERAWYDNHR (67 aa). Disordered stretches follow at residues 122-141, 276-302, 331-497, and 522-545; these read EKEH…SFGE, EYGQ…IANV, SFKS…KEVN, and HATA…RKNR. Acidic residues-rich tracts occupy residues 129 to 141 and 283 to 295; these read EEDE…SFGE and DASD…EELE. The stretch at 180 to 286 forms a coiled coil; sequence RWEKRAMEKE…YGQEFGDASD (107 aa). The C2H2-type 1 zinc-finger motif lies at 323 to 347; the sequence is LYCPACDKSFKSDKAMKNHSKSKKH. The segment covering 339-348 has biased composition (basic residues); the sequence is KNHSKSKKHR. Acidic residues predominate over residues 372–388; the sequence is REEDDEEEDDDDDDEQN. The span at 394 to 406 shows a compositional bias: basic residues; that stretch reads KLSKRQKKKKRLQ. Residues 498–522 form a C2H2-type 2 zinc finger; the sequence is LRCVTCQYEFTTRNKLFDHLKSTGH. Residues 535–545 are compositionally biased toward basic residues; that stretch reads SKKKKDSRKNR.

May act as a co-chaperone for HSP70. The polypeptide is DnaJ homolog subfamily C member 21 (dnajc21) (Danio rerio (Zebrafish)).